Reading from the N-terminus, the 273-residue chain is Terpene cyclase ascF (273 aa).

The next 7 membrane-spanning stretches (helical) occupy residues Val-18–Ala-38, Met-49–Val-69, Met-78–Leu-98, Ile-113–Ile-133, Tyr-153–Val-173, Gly-178–Met-198, and Ala-217–Leu-237.

Belongs to the paxB family.

Its subcellular location is the membrane. The enzyme catalyses ilicicolin A epoxide = ilicicolin C. It functions in the pathway secondary metabolite biosynthesis; terpenoid biosynthesis. Its function is as follows. Terpene cyclase; part of the asc-1 gene cluster that mediates the biosynthesis of both ascochlorin and ascofuranone, a strong inhibitor of cyanide-insensitive alternative oxidases and a promising drug candidate against African trypanosomiasis. The first step in the pathway is performed by the non-reducing polyketide synthase ascC that produces orsellinic acid by condensing acetyl-CoA with 3 malonyl-CoA units. Orsellinic acid is then prenylated by the prenyltransferase ascA to yield ilicicolinic acid B. Ilicicolinic acid B is further reduced to ilicicolin B by the reductase ascB. The halogenase ascD then chlorinates ilicicolin B to produce ilicicolin A which is converted to ilicicolin A epoxide by the cytochrome P450 monooxygenase ascE that catalyzes stereoselective epoxidation of the terminal double bond of the prenyl group. Ilicicolin A epoxide is the last common precursor for the biosynthesis of ascofuranone and ascochlorin. The terpene cyclase ascF produces a monocyclic terpene, and the cyclization reaction is proposed to be initiated by protonation of the terminal epoxide of ilicicolin A epoxide to generate a monocyclic tertiarycation, which is followed by a series of hydride and methyl shifts with abstraction of proton, leading to the formation of the (14S,15R,19R)-trimethylcyclohexanone ring structure of ilicicolin C, which is finally reduced to ascochlorin by the dehydrogenase ascG. On the other hand, ilicicolin A epoxide is hydroxylated by the cytochrome P450 monooxygenase ascH, and the resultant product is cyclized by the terpene cyclase ascI to ascofuranol via protonation-initiated epoxide ring opening, which facilitates the 6-endo-tet cyclization to form the tetrahy-drofuran ring. Finally, ascofuranol is oxidized into ascofuranone by ascJ. The sequence is that of Terpene cyclase ascF from Acremonium egyptiacum (Oospora egyptiaca).